A 258-amino-acid polypeptide reads, in one-letter code: 5-oxoprolinase subunit A (258 aa).

It belongs to the LamB/PxpA family. Forms a complex composed of PxpA, PxpB and PxpC.

The enzyme catalyses 5-oxo-L-proline + ATP + 2 H2O = L-glutamate + ADP + phosphate + H(+). In terms of biological role, catalyzes the cleavage of 5-oxoproline to form L-glutamate coupled to the hydrolysis of ATP to ADP and inorganic phosphate. The sequence is that of 5-oxoprolinase subunit A from Deinococcus radiodurans (strain ATCC 13939 / DSM 20539 / JCM 16871 / CCUG 27074 / LMG 4051 / NBRC 15346 / NCIMB 9279 / VKM B-1422 / R1).